The chain runs to 234 residues: Phosphoribosylaminoimidazole-succinocarboxamide synthase (234 aa).

This sequence belongs to the SAICAR synthetase family.

It catalyses the reaction 5-amino-1-(5-phospho-D-ribosyl)imidazole-4-carboxylate + L-aspartate + ATP = (2S)-2-[5-amino-1-(5-phospho-beta-D-ribosyl)imidazole-4-carboxamido]succinate + ADP + phosphate + 2 H(+). It functions in the pathway purine metabolism; IMP biosynthesis via de novo pathway; 5-amino-1-(5-phospho-D-ribosyl)imidazole-4-carboxamide from 5-amino-1-(5-phospho-D-ribosyl)imidazole-4-carboxylate: step 1/2. In Staphylococcus carnosus (strain TM300), this protein is Phosphoribosylaminoimidazole-succinocarboxamide synthase.